The following is a 430-amino-acid chain: Adenylosuccinate synthetase (430 aa).

GTP is bound by residues Gly-13–Lys-19 and Gly-41–Thr-43. Residue Asp-14 is the Proton acceptor of the active site. Residues Asp-14 and Gly-41 each contribute to the Mg(2+) site. Residues Asp-14–Lys-17, Asn-39–His-42, Thr-130, Arg-144, Gln-225, Thr-240, and Arg-304 contribute to the IMP site. His-42 (proton donor) is an active-site residue. Substrate is bound at residue Ala-300 to Arg-306. Residues Arg-306, Lys-332–Asp-334, and Ser-414–Gly-416 each bind GTP.

This sequence belongs to the adenylosuccinate synthetase family. As to quaternary structure, homodimer. The cofactor is Mg(2+).

The protein resides in the cytoplasm. It carries out the reaction IMP + L-aspartate + GTP = N(6)-(1,2-dicarboxyethyl)-AMP + GDP + phosphate + 2 H(+). It participates in purine metabolism; AMP biosynthesis via de novo pathway; AMP from IMP: step 1/2. Its function is as follows. Plays an important role in the de novo pathway of purine nucleotide biosynthesis. Catalyzes the first committed step in the biosynthesis of AMP from IMP. The protein is Adenylosuccinate synthetase of Xanthomonas oryzae pv. oryzae (strain MAFF 311018).